The chain runs to 109 residues: Fluorescence recovery protein (109 aa).

Probably a dimer, interacts with the C-terminal domain of OCP-R.

The protein localises to the cellular thylakoid membrane. Its function is as follows. Destabilizes orange carotenoid protein-R form (OCP-R), the FRP-OCP interaction accelerates the OCP-R to OCP-O conversion. Increases fluorescence recovery following non-photochemical quenching (NPQ) by OCP, most probably by destabilizing OCP-R binding to the phycobilisome core. In Synechocystis sp. (strain ATCC 27184 / PCC 6803 / Kazusa), this protein is Fluorescence recovery protein (frp).